Consider the following 280-residue polypeptide: F-box only protein 27 (280 aa).

Residues 1–26 (MGAWASRGRAARVPAPEPESEPEEAL) form a disordered region. The F-box domain occupies 25–72 (ALDLSQLPPELLLVVLSHVPPRTLLGRCRQVCRGWRALVDGQALWLLI). Residues 100 to 277 (PCPLGRFCAR…VTNSSVIVRV (178 aa)) form the FBA domain.

In terms of assembly, part of a SCF (SKP1-cullin-F-box) protein ligase complex. Interacts with SKP1 and CUL1.

Functionally, substrate-recognition component of the SCF (SKP1-CUL1-F-box protein)-type E3 ubiquitin ligase complex. Able to recognize and bind complex-type oligosaccharides. This is F-box only protein 27 (FBXO27) from Macaca fascicularis (Crab-eating macaque).